Reading from the N-terminus, the 132-residue chain is Small ribosomal subunit protein uS8 (132 aa).

It belongs to the universal ribosomal protein uS8 family. As to quaternary structure, part of the 30S ribosomal subunit. Contacts proteins S5 and S12.

One of the primary rRNA binding proteins, it binds directly to 16S rRNA central domain where it helps coordinate assembly of the platform of the 30S subunit. This Desulforamulus reducens (strain ATCC BAA-1160 / DSM 100696 / MI-1) (Desulfotomaculum reducens) protein is Small ribosomal subunit protein uS8.